The primary structure comprises 131 residues: Transcriptional activator protein (131 aa).

The short motif at 13–28 is the Nuclear localization signal element; the sequence is KAQHRIAKKRAVRRRR. Residues 33–52 fold into a zinc finger; the sequence is CGCSIYIHINCAKDGNGFTH. Residues 78–131 are disordered; that stretch reads DVQXGGSTLHAHKDIPHTNPVQPQPEESTKSSQSVPELPSLDGIDSSFWDDIFE. Positions 117–131 are transactivation; it reads SLDGIDSSFWDDIFE.

This sequence belongs to the geminiviridae transcriptional activator protein family. In terms of assembly, monomer. Homodimer. Homooligomer. Self-interaction correlates with nuclear localization and efficient activation of transcription. Monomers suppress local silencing by interacting with and inactivating host adenosine kinase 2 (ADK2) in the cytoplasm. Interacts with and inhibits host SNF1 kinase. Binds to ssDNA. Phosphorylated.

The protein localises to the host nucleus. Its subcellular location is the host cytoplasm. In terms of biological role, strong activator of the late viral genes promoters. Enhances the expression of the capsid protein and nuclear shuttle protein. Acts as a suppressor of RNA-mediated gene silencing, also known as post-transcriptional gene silencing (PTGS), a mechanism of plant viral defense that limits the accumulation of viral RNAs. Suppresses the host RNA silencing by inhibiting adenosine kinase 2 (ADK2), a kinase involved in a general methylation pathway. Also suppresses the host basal defense by interacting with and inhibiting SNF1 kinase, a key regulator of cell metabolism implicated in innate antiviral defense. Determines pathogenicity. This Cucurbita moschata (Winter crookneck squash) protein is Transcriptional activator protein.